Reading from the N-terminus, the 298-residue chain is MKKNIIIGSRGSILALAQANLVKDRLQGNYPNLSFEIKEIVTSGDKDLKSNWENSDISLKSFFTKEIEQELLDGEIDIAVHSMKDMPAVSAKSLICGAIPDREDPRDVLVSKNGLLVTLPQGAKVGTSSLRRAMNLKTVRPDFEIKHLRGNIHTRLKKLETEDYDAIVLAAAGLKRTGLADKITEYLNGEVFPPAPAQGVLYIQCRENDEEIKEILKSIHNEAIAKIVEIEREFSKIFDGGCHTPMGCYSQVNGDKIKFTAVYLDEGKQIRAVVEDDLAKGKEIAYMAAEEIKNKIVK.

Cysteine 242 is subject to S-(dipyrrolylmethanemethyl)cysteine.

The protein belongs to the HMBS family. As to quaternary structure, monomer. Dipyrromethane is required as a cofactor.

The enzyme catalyses 4 porphobilinogen + H2O = hydroxymethylbilane + 4 NH4(+). The protein operates within porphyrin-containing compound metabolism; protoporphyrin-IX biosynthesis; coproporphyrinogen-III from 5-aminolevulinate: step 2/4. Tetrapolymerization of the monopyrrole PBG into the hydroxymethylbilane pre-uroporphyrinogen in several discrete steps. The sequence is that of Porphobilinogen deaminase from Fusobacterium nucleatum subsp. nucleatum (strain ATCC 25586 / DSM 15643 / BCRC 10681 / CIP 101130 / JCM 8532 / KCTC 2640 / LMG 13131 / VPI 4355).